The sequence spans 221 residues: Fructokinase (221 aa).

It belongs to the carbohydrate kinase PfkB family.

The catalysed reaction is D-fructose + ATP = D-fructose 6-phosphate + ADP + H(+). The polypeptide is Fructokinase (scrK) (Salmonella thompson).